The chain runs to 280 residues: Nucleotide-binding protein Mfla_0145 (280 aa).

8–15 (GLSGSGKS) serves as a coordination point for ATP. 57 to 60 (DTRS) serves as a coordination point for GTP.

Belongs to the RapZ-like family.

In terms of biological role, displays ATPase and GTPase activities. This is Nucleotide-binding protein Mfla_0145 from Methylobacillus flagellatus (strain ATCC 51484 / DSM 6875 / VKM B-1610 / KT).